We begin with the raw amino-acid sequence, 199 residues long: uncharacterized protein (199 aa).

Residues 71–104 (RANATNKLTVIAEQIQHLQEQARKVLEDARRDAD) adopt a coiled-coil conformation.

This is an uncharacterized protein from Mus musculus (Mouse).